The chain runs to 370 residues: 4-hydroxy-3-methylbut-2-en-1-yl diphosphate synthase (flavodoxin) (370 aa).

[4Fe-4S] cluster-binding residues include Cys268, Cys271, Cys303, and Glu310.

This sequence belongs to the IspG family. The cofactor is [4Fe-4S] cluster.

The enzyme catalyses (2E)-4-hydroxy-3-methylbut-2-enyl diphosphate + oxidized [flavodoxin] + H2O + 2 H(+) = 2-C-methyl-D-erythritol 2,4-cyclic diphosphate + reduced [flavodoxin]. It participates in isoprenoid biosynthesis; isopentenyl diphosphate biosynthesis via DXP pathway; isopentenyl diphosphate from 1-deoxy-D-xylulose 5-phosphate: step 5/6. Converts 2C-methyl-D-erythritol 2,4-cyclodiphosphate (ME-2,4cPP) into 1-hydroxy-2-methyl-2-(E)-butenyl 4-diphosphate. This is 4-hydroxy-3-methylbut-2-en-1-yl diphosphate synthase (flavodoxin) from Bacillus cereus (strain B4264).